The following is an 897-amino-acid chain: MLEIFDKLGYKKQKCKTCGHEFYAQVDRDTCGDAPCDEYEFIGNPATDKPYTLYEIQQVFREFLEKEGHTPIKRYPILAKRWRDDVFLVGASIFCFQPWVTSGMVKPPANPLEIEQPSVRLNDVDNVGRTGRHMTCFTMGSHTVINTEENFIYWEDETIRLCHEFFKYIGINTEEICFIKSWWSGGGNEGPCYEVCVRGVELATLVFIQYKTLDNGEKEEIPIKVVDTGYGLERIAWISQGTPTAYDACFAPVVDKLKELTDVKVNTDILARNAQIAGMMDIEDIGDIKELRQQVANSLGITLDELLESAEPMEAIYIIADHTRCLAFMLADGIIPSNVKEGYLARLVLRRTIRFMKELNMKESLAEVMGIQLEFLTKFYPEIKDSEDHIMNIISLEEERYQSTIKKGTSIVKRSIKRLKKEGKTEMPLDMLMDLYDAHGIPPETVVEIAGDNFTVNVPDNFFTLVAGAHEKDTSNKKESFEIDYPETDLLFYKDFNQKEFEAEVLGVVEKDGKNTLVFDKTVFYPEGGGQPSDVGTISVDGAVVNINYAEKVNNVVLHHVDGDVDLDNFVGKKVEGKIDWNRRITLARHHSATHLIVAAARKILGEHIWQAGAQKGVSRSRIDLSHYKRISQEELNEIEKLANEYVMDNIELDIKFYTRDEAESLYGFKLYQGGIVPGKSIRVVKIPGIDVQACAGTHVLRTGDIGPIKINKTERVQDGVERIDFSAGTAAVDSIQNENKLLRESSGIFKVDDDQLPKTCDRFFSEWKAQKNEIDKLKSEIASLKMNSLADDVTEINGLKVVKQLIDADFKELQKIATDFTDNDKADVVLMGNNDGKIVGAASQNAIDAGIKVNEIIKKAAGVLGGGGGGRLTLAQGAGPKCENMNEALNIAIDLI.

Zn(2+) is bound by residues histidine 591, histidine 595, cysteine 695, and histidine 699.

The protein belongs to the class-II aminoacyl-tRNA synthetase family. It depends on Zn(2+) as a cofactor.

It is found in the cytoplasm. It carries out the reaction tRNA(Ala) + L-alanine + ATP = L-alanyl-tRNA(Ala) + AMP + diphosphate. Catalyzes the attachment of alanine to tRNA(Ala) in a two-step reaction: alanine is first activated by ATP to form Ala-AMP and then transferred to the acceptor end of tRNA(Ala). Also edits incorrectly charged Ser-tRNA(Ala) and Gly-tRNA(Ala) via its editing domain. The protein is Alanine--tRNA ligase of Methanobrevibacter smithii (strain ATCC 35061 / DSM 861 / OCM 144 / PS).